The chain runs to 1259 residues: uncharacterized protein (1259 aa).

Residues 354-410 form a disordered region; sequence KLNQAGGKRNSSMNNSTQNNNSSRSNNSARNNNSVWNNNNSAWKNNNSAWNDNSSWK. The span at 362 to 410 shows a compositional bias: low complexity; that stretch reads RNSSMNNSTQNNNSSRSNNSARNNNSVWNNNNSAWKNNNSAWNDNSSWK.

The protein resides in the virion. This is an uncharacterized protein from Acanthamoeba polyphaga (Amoeba).